Reading from the N-terminus, the 312-residue chain is Serine/threonine-protein phosphatase CPPED1 (312 aa).

The residue at position 2 (Ser2) is a Phosphoserine. Residues 47 to 250 (KAWSTGNCDA…AVFSGHYHRN (204 aa)) form a catalytic region. Positions 90, 127, and 246 each coordinate a divalent metal cation. Ser293 is subject to Phosphoserine.

Belongs to the metallophosphoesterase superfamily. CPPED1 family. Requires a divalent metal cation as cofactor.

The protein localises to the cytoplasm. It carries out the reaction O-phospho-L-seryl-[protein] + H2O = L-seryl-[protein] + phosphate. It catalyses the reaction O-phospho-L-threonyl-[protein] + H2O = L-threonyl-[protein] + phosphate. Protein phosphatase that dephosphorylates AKT family kinase specifically at 'Ser-473', blocking cell cycle progression and promoting cell apoptosis. May play an inhibitory role in glucose uptake by adipocytes. This is Serine/threonine-protein phosphatase CPPED1 (Cpped1) from Mus musculus (Mouse).